The chain runs to 522 residues: Transmembrane protein 213R (522 aa).

2 helical membrane-spanning segments follow: residues 33–50 (NTIT…LLFG) and 55–72 (SLYI…IYSQ).

It belongs to the IIV-6 213R family.

The protein localises to the membrane. In Invertebrate iridescent virus 6 (IIV-6), this protein is Transmembrane protein 213R.